The following is a 445-amino-acid chain: GRAM domain-containing protein 2B (445 aa).

At Met-1 the chain carries N-acetylmethionine. A compositionally biased stretch (polar residues) spans 1–10 (MVKKPISSSD). The disordered stretch occupies residues 1–119 (MVKKPISSSD…RKKSSSSSQY (119 aa)). Low complexity predominate over residues 18–37 (PSSPKSSAGASHSSTDSPSS). Polar residues-rich tracts occupy residues 56–68 (KSPTAQSPTSSVE) and 82–93 (SKSSFDGSNLLS). Positions 94–112 (DKNDCKTESKADSKTERKK) are enriched in basic and acidic residues. The region spanning 123–190 (MHFHKLFLDV…FSVTLIKKTK (68 aa)) is the GRAM domain. Phosphoserine is present on residues Ser-238, Ser-255, and Ser-265. The disordered stretch occupies residues 277-331 (DLEGYSSSGSQTPESENSRDFHVTESQTVLNVTKGETKPPRTDAHGSRAPDGKAK). Over residues 281-291 (YSSSGSQTPES) the composition is skewed to polar residues. The segment covering 311–330 (GETKPPRTDAHGSRAPDGKA) has biased composition (basic and acidic residues).

The polypeptide is GRAM domain-containing protein 2B (Gramd2b) (Rattus norvegicus (Rat)).